The chain runs to 550 residues: Sterol O-acyltransferase 1 (550 aa).

The residue at position 1 (M1) is an N-acetylmethionine. Positions 1–36 (MVGEEKMSLRNRLSKSRENPEEDEDQRKPAKESLEA) are disordered. Residues 1–138 (MVGEEKMSLR…LDELLEVDHI (138 aa)) lie on the Cytoplasmic side of the membrane. S8 is modified (phosphoserine). Residues 15-34 (KSRENPEEDEDQRKPAKESL) are compositionally biased toward basic and acidic residues. H137 contacts cholesterol. Residues 139 to 160 (RTIYHMFIALLILFILSTLVVD) traverse the membrane as a helical segment. Over 161 to 180 (YIDEGRLVLEFSLLSYAFGK) the chain is Lumenal. A helical membrane pass occupies residues 181–206 (FPTVVWTWWIMFLSTFSVPYFLFQRW). At 207–218 (ATGYSKSSHPLI) the chain is on the cytoplasmic side. Residues 219–244 (NSLFHGFLFMVFQIGILGFGPTYVVL) traverse the membrane as a helical segment. The Lumenal segment spans residues 245–252 (AYTLPPAS). The helical transmembrane segment at 253–276 (RFIIIFEQIRFVMKAHSFVRENVP) threads the bilayer. Residues 277 to 319 (RVLNSAKEKSSTVPIPTVNQYLYFLFAPTLIYRDSYPRNPTVR) are Cytoplasmic-facing. Residues 320 to 352 (WGYVAMQFAQVFGCFFYVYYIFERLCAPLFRNI) traverse the membrane as a helical segment. Over 353–369 (KQEPFSARVLVLCVFNS) the chain is Lumenal. The chain crosses the membrane as a helical span at residues 370–395 (ILPGVLILFLTFFAFLHCWLNAFAEM). Residues 396-443 (LRFGDRMFYKDWWNSTSYSNYYRTWNVVVHDWLYYYAYKDFLWFFSKR) lie on the Cytoplasmic side of the membrane. An FYXDWWN motif motif is present at residues 403-409 (FYKDWWN). An acyl-CoA-binding residues include N415, R418, N421, H425, Y433, K445, and S456. The helical transmembrane segment at 444–468 (FKSAAMLAVFAVSAVVHEYALAVCL) threads the bilayer. H460 is a catalytic residue. Residues 469 to 474 (SFFYPV) lie on the Lumenal side of the membrane. A helical membrane pass occupies residues 475–490 (LFVLFMFFGMAFNFIV). Residues 491–496 (NDSRKK) are Cytoplasmic-facing. A helical membrane pass occupies residues 497 to 528 (PIWNVMMWTSLFLGNGVLLCFYSQEWYARQHC). A disulfide bridge connects residues C528 and C546. The Lumenal segment spans residues 529 to 550 (PLKNPTFLDYVRPRSWTCRYVF).

This sequence belongs to the membrane-bound acyltransferase family. Sterol o-acyltransferase subfamily. As to quaternary structure, may form homo- or heterodimers. Interacts with UBIAD1. Expressed in most tissues, but most strongly in the adrenal gland. Expressed more strongly in liver Kupffer cells than in hepatocytes.

The protein localises to the endoplasmic reticulum membrane. It catalyses the reaction a sterol + a long-chain fatty acyl-CoA = a long-chain 3-hydroxysterol ester + CoA. The enzyme catalyses cholesterol + an acyl-CoA = a cholesterol ester + CoA. The catalysed reaction is cholesterol + (9Z)-octadecenoyl-CoA = cholesteryl (9Z-octadecenoate) + CoA. It carries out the reaction cholesterol + hexadecanoyl-CoA = cholesteryl hexadecanoate + CoA. It catalyses the reaction octadecanoyl-CoA + cholesterol = cholesteryl octadecanoate + CoA. The enzyme catalyses (9Z,12Z)-octadecadienoyl-CoA + cholesterol = cholesteryl (9Z,12Z)-octadecadienoate + CoA. The catalysed reaction is (5Z,8Z,11Z,14Z)-eicosatetraenoyl-CoA + cholesterol = cholesteryl (5Z,8Z,11Z,14Z)-eicosatetraenoate + CoA. It carries out the reaction (9Z)-hexadecenoyl-CoA + cholesterol = cholesteryl (9Z)-hexadecenoate + CoA. It catalyses the reaction (11Z)-octadecenoyl-CoA + cholesterol = cholesteryl (11Z)-octadecenoate + CoA. The enzyme catalyses (7Z)-octadecenoyl-CoA + cholesterol = cholesteryl (7Z)-octadecenoate + CoA. Its function is as follows. Catalyzes the formation of fatty acid-cholesterol esters, which are less soluble in membranes than cholesterol. Plays a role in lipoprotein assembly and dietary cholesterol absorption. Preferentially utilizes oleoyl-CoA ((9Z)-octadecenoyl-CoA) as a substrate: shows a higher activity towards an acyl-CoA substrate with a double bond at the delta-9 position (9Z) than towards saturated acyl-CoA or an unsaturated acyl-CoA with a double bond at the delta-7 (7Z) or delta-11 (11Z) positions. The chain is Sterol O-acyltransferase 1 (SOAT1) from Chlorocebus aethiops (Green monkey).